The sequence spans 295 residues: MYYEKAVQKTINWIESHLHEQISNEDIVNVSSFSKFHFHRIFQKEVGMSVASYIRLRRLANAAAALLYTDHRIIDIALYYQFESQEAFTRTFKKMYHMPPGAYRTFMKRFTSKKEESYMEKKMKGWVLSGSHPFQFEMGIDRENVHQGKASGYLKSTMVQDIGEFATMMQQFKADRYLGKRLRLSSFIKTKGVQHFASLWMRVDSAADDVLQFDNMSNRPITGTTNWNHYAIVLDVPENSAVISFGVQLSGPGQVWMDHVVFEEVDESVPSTNLEMPGELLDEPVNLSFEEELQK.

One can recognise an HTH araC/xylS-type domain in the interval 8–106; sequence QKTINWIESH…HMPPGAYRTF (99 aa). Residues 25 to 46 constitute a DNA-binding region (H-T-H motif); that stretch reads EDIVNVSSFSKFHFHRIFQKEV.

Functionally, probable transcriptional regulator. This is an uncharacterized protein from Bacillus subtilis (strain 168).